The following is a 311-amino-acid chain: MAKRTQAILLLLLAISLIMSSSHVDGGGIAIYWGQNGNEGTLTQTCSTRKYSYVNIAFLNKFGNGQTPQINLAGHCNPAAGGCTIVSNGIRSCQIQGIKVMLSLGGGIGSYTLASQADAKNVADYLWNNFLGGKSSSRPLGDAVLDGIDFDIEHGSTLYWDDLARYLSAYSKQGKKVYLTAAPQCPFPDRYLGTALNTGLFDYVWVQFYNNPPCQYSSGNINNIINSWNRWTTSINAGKIFLGLPAAPEAAGSGYVPPDVLISRILPEIKKSPKYGGVMLWSKFYDDKNGYSSSILDSVLFLHSEECMTVL.

An N-terminal signal peptide occupies residues 1 to 26 (MAKRTQAILLLLLAISLIMSSSHVDG). Positions 27–302 (GGIAIYWGQN…SSILDSVLFL (276 aa)) constitute a GH18 domain. Disulfide bonds link C46–C93 and C76–C83. E153 (proton donor) is an active-site residue. C185 and C214 are joined by a disulfide. A propeptide spans 300–311 (LFLHSEECMTVL) (removed in mature form).

Belongs to the glycosyl hydrolase 18 family. Chitinase class II subfamily.

It is found in the vacuole. The enzyme catalyses Random endo-hydrolysis of N-acetyl-beta-D-glucosaminide (1-&gt;4)-beta-linkages in chitin and chitodextrins.. It carries out the reaction Hydrolysis of (1-&gt;4)-beta-linkages between N-acetylmuramic acid and N-acetyl-D-glucosamine residues in a peptidoglycan and between N-acetyl-D-glucosamine residues in chitodextrins.. Bifunctional enzyme with lysozyme / chitinase activity. May have a role in plugging the latex vessel and cessation of latex flow. This Hevea brasiliensis (Para rubber tree) protein is Hevamine-A.